The sequence spans 109 residues: Small ribosomal subunit protein bS6 (109 aa).

Belongs to the bacterial ribosomal protein bS6 family.

In terms of biological role, binds together with bS18 to 16S ribosomal RNA. The protein is Small ribosomal subunit protein bS6 of Anaplasma phagocytophilum (strain HZ).